A 622-amino-acid chain; its full sequence is Histone-lysine N-methyltransferase set9 (622 aa).

Residues 120–234 form the SET domain; it reads SPFEITTTNR…IGEEITVSYG (115 aa). Disordered stretches follow at residues 262–314, 335–394, 427–470, and 576–622; these read VPSE…GKFV, QPAG…TTAT, PTTS…RGKP, and DRGV…RMTM. Positions 265–285 are enriched in polar residues; that stretch reads EPQSKASTPALNDDTLSTDSH. Residues 376 to 394 show a composition bias toward low complexity; it reads PPSTAANESERSSTSTTAT. 2 stretches are compositionally biased toward polar residues: residues 427–437 and 446–458; these read PTTSLRSGSTE and DQPS…SIGS. Residues 590–607 show a composition bias toward basic and acidic residues; sequence SEPRTETEGSEGCEDRRT. A compositionally biased stretch (basic residues) spans 608–622; sequence TRASRRRTRSLRMTM.

Belongs to the class V-like SAM-binding methyltransferase superfamily. Histone-lysine methyltransferase family. Suvar4-20 subfamily.

The protein resides in the nucleus. It is found in the chromosome. It catalyses the reaction L-lysyl(20)-[histone H4] + 3 S-adenosyl-L-methionine = N(6),N(6),N(6)-trimethyl-L-lysyl(20)-[histone H4] + 3 S-adenosyl-L-homocysteine + 3 H(+). Functionally, histone methyltransferase that trimethylates 'Lys-20' of histone H4 to form H4K20me3. This chain is Histone-lysine N-methyltransferase set9 (set9), found in Aspergillus fumigatus (strain ATCC MYA-4609 / CBS 101355 / FGSC A1100 / Af293) (Neosartorya fumigata).